A 298-amino-acid chain; its full sequence is Probable oxidoreductase (298 aa).

9–33 (VVTGGASGLGAETVRALAAAGAEVT) provides a ligand contact to NAD(+). Residue serine 139 participates in substrate binding. Tyrosine 165 acts as the Proton acceptor in catalysis.

This sequence belongs to the short-chain dehydrogenases/reductases (SDR) family.

The sequence is that of Probable oxidoreductase from Streptomyces antibioticus.